A 303-amino-acid chain; its full sequence is UDP-3-O-acyl-N-acetylglucosamine deacetylase (303 aa).

Zn(2+) contacts are provided by His78, His237, and Asp241. The active-site Proton donor is the His264.

The protein belongs to the LpxC family. Requires Zn(2+) as cofactor.

It catalyses the reaction a UDP-3-O-[(3R)-3-hydroxyacyl]-N-acetyl-alpha-D-glucosamine + H2O = a UDP-3-O-[(3R)-3-hydroxyacyl]-alpha-D-glucosamine + acetate. It participates in glycolipid biosynthesis; lipid IV(A) biosynthesis; lipid IV(A) from (3R)-3-hydroxytetradecanoyl-[acyl-carrier-protein] and UDP-N-acetyl-alpha-D-glucosamine: step 2/6. Its function is as follows. Catalyzes the hydrolysis of UDP-3-O-myristoyl-N-acetylglucosamine to form UDP-3-O-myristoylglucosamine and acetate, the committed step in lipid A biosynthesis. The polypeptide is UDP-3-O-acyl-N-acetylglucosamine deacetylase (Pseudomonas putida (strain GB-1)).